The following is a 510-amino-acid chain: Histidine ammonia-lyase (510 aa).

The 5-imidazolinone (Ala-Gly) cross-link spans 143 to 145; that stretch reads ASG. Serine 144 carries the 2,3-didehydroalanine (Ser) modification.

Belongs to the PAL/histidase family. Contains an active site 4-methylidene-imidazol-5-one (MIO), which is formed autocatalytically by cyclization and dehydration of residues Ala-Ser-Gly.

The protein localises to the cytoplasm. It carries out the reaction L-histidine = trans-urocanate + NH4(+). It participates in amino-acid degradation; L-histidine degradation into L-glutamate; N-formimidoyl-L-glutamate from L-histidine: step 1/3. In Shewanella piezotolerans (strain WP3 / JCM 13877), this protein is Histidine ammonia-lyase.